The primary structure comprises 274 residues: Cytochrome b-c1 complex subunit Rieske, mitochondrial (274 aa).

At 79-103 (SHTDVKVPDFSEYRRPEVLDSTKSS) the chain is on the mitochondrial matrix side. The helical transmembrane segment at 104–140 (RESSEARKGFSYLVTAVTTVGVAYAAKNAVTQFVSSM) threads the bilayer. The Mitochondrial intermembrane segment spans residues 141–274 (SASADVLALA…FTSDDMVIVG (134 aa)). The 86-residue stretch at 187-272 (EAAVELSQLR…YEFTSDDMVI (86 aa)) folds into the Rieske domain. [2Fe-2S] cluster contacts are provided by cysteine 217, histidine 219, cysteine 236, histidine 239, and serine 241. An intrachain disulfide couples cysteine 222 to cysteine 238.

The protein belongs to the Rieske iron-sulfur protein family. In terms of assembly, component of the ubiquinol-cytochrome c oxidoreductase (cytochrome b-c1 complex, complex III, CIII), a multisubunit enzyme composed of 11 subunits. The complex is composed of 3 respiratory subunits cytochrome b, cytochrome c1 and Rieske protein UQCRFS1, 2 core protein subunits UQCRC1/QCR1 and UQCRC2/QCR2, and 6 low-molecular weight protein subunits UQCRH/QCR6, UQCRB/QCR7, UQCRQ/QCR8, UQCR10/QCR9, UQCR11/QCR10 and subunit 9, the cleavage product of Rieske protein UQCRFS1. The complex exists as an obligatory dimer and forms supercomplexes (SCs) in the inner mitochondrial membrane with NADH-ubiquinone oxidoreductase (complex I, CI) and cytochrome c oxidase (complex IV, CIV), resulting in different assemblies (supercomplex SCI(1)III(2)IV(1) and megacomplex MCI(2)III(2)IV(2)). Incorporation of the Rieske protein UQCRFS1 is the penultimate step in complex III assembly. Interacts with TTC19, which is involved in the clearance of UQCRFS1 fragments. As to quaternary structure, component of the ubiquinol-cytochrome c oxidoreductase (cytochrome b-c1 complex, complex III, CIII). Subunit 9 corresponds to the mitochondrial targeting sequence (MTS) of Rieske protein UQCRFS1. It is retained after processing and incorporated inside complex III, where it remains bound to the complex and localizes between the 2 core subunits UQCRC1/QCR1 and UQCRC2/QCR2. [2Fe-2S] cluster serves as cofactor. Proteolytic processing is necessary for the correct insertion of UQCRFS1 in the complex III dimer. Several fragments are generated during UQCRFS1 insertion, most probably due to the endogenous matrix-processing peptidase (MPP) activity of the 2 core protein subunits UQCRC1/QCR1 and UQCRC2/QCR2, which are homologous to the 2 mitochondrial-processing peptidase (MPP) subunits beta-MPP and alpha-MPP respectively. The action of the protease is also necessary for the clearance of the UQCRFS1 fragments.

Its subcellular location is the mitochondrion inner membrane. It catalyses the reaction a quinol + 2 Fe(III)-[cytochrome c](out) = a quinone + 2 Fe(II)-[cytochrome c](out) + 2 H(+)(out). Its function is as follows. Component of the ubiquinol-cytochrome c oxidoreductase, a multisubunit transmembrane complex that is part of the mitochondrial electron transport chain which drives oxidative phosphorylation. The respiratory chain contains 3 multisubunit complexes succinate dehydrogenase (complex II, CII), ubiquinol-cytochrome c oxidoreductase (cytochrome b-c1 complex, complex III, CIII) and cytochrome c oxidase (complex IV, CIV), that cooperate to transfer electrons derived from NADH and succinate to molecular oxygen, creating an electrochemical gradient over the inner membrane that drives transmembrane transport and the ATP synthase. The cytochrome b-c1 complex catalyzes electron transfer from ubiquinol to cytochrome c, linking this redox reaction to translocation of protons across the mitochondrial inner membrane, with protons being carried across the membrane as hydrogens on the quinol. In the process called Q cycle, 2 protons are consumed from the matrix, 4 protons are released into the intermembrane space and 2 electrons are passed to cytochrome c. The Rieske protein is a catalytic core subunit containing a [2Fe-2S] iron-sulfur cluster. It cycles between 2 conformational states during catalysis to transfer electrons from the quinol bound in the Q(0) site in cytochrome b to cytochrome c1. Incorporation of UQCRFS1 is the penultimate step in complex III assembly. Functionally, component of the ubiquinol-cytochrome c oxidoreductase (cytochrome b-c1 complex, complex III, CIII). UQCRFS1 undergoes proteolytic processing once it is incorporated in the complex III dimer. One of the fragments, called subunit 9, corresponds to its mitochondrial targeting sequence (MTS). The proteolytic processing is necessary for the correct insertion of UQCRFS1 in the complex III dimer, but the persistence of UQCRFS1-derived fragments may prevent newly imported UQCRFS1 to be processed and assembled into complex III and is detrimental for the complex III structure and function. This is Cytochrome b-c1 complex subunit Rieske, mitochondrial (UQCRFS1) from Symphalangus syndactylus (Siamang).